The chain runs to 116 residues: Large ribosomal subunit protein bL19 (116 aa).

Belongs to the bacterial ribosomal protein bL19 family.

Its function is as follows. This protein is located at the 30S-50S ribosomal subunit interface and may play a role in the structure and function of the aminoacyl-tRNA binding site. This Stutzerimonas stutzeri (strain A1501) (Pseudomonas stutzeri) protein is Large ribosomal subunit protein bL19.